Reading from the N-terminus, the 108-residue chain is KSAPKHEWIGKNSASWALCRCNNNWVVRHNSKEIPIEPAPHLRRVGILLDYDNGSIAFYDALNSIHLYTFDVALAQPVCPTFTVWNKCLTIITGLPIPDHLDCTEQLP.

A B30.2/SPRY domain is found at 1–100 (KSAPKHEWIG…IITGLPIPDH (100 aa)).

This sequence belongs to the TRIM/RBCC family. In terms of assembly, homodimer or heterodimer with MID2. Interacts with IGBP1.

The protein resides in the cytoplasm. Its subcellular location is the cytoskeleton. It carries out the reaction S-ubiquitinyl-[E2 ubiquitin-conjugating enzyme]-L-cysteine + [acceptor protein]-L-lysine = [E2 ubiquitin-conjugating enzyme]-L-cysteine + N(6)-ubiquitinyl-[acceptor protein]-L-lysine.. Its function is as follows. Has E3 ubiquitin ligase activity towards IGBP1, promoting its monoubiquitination, which results in deprotection of the catalytic subunit of protein phosphatase PP2A, and its subsequent degradation by polyubiquitination. This chain is E3 ubiquitin-protein ligase Midline-1 (Mid1), found in Mus caroli (Ryukyu mouse).